The primary structure comprises 383 residues: Succinyl-diaminopimelate desuccinylase (383 aa).

His-73 provides a ligand contact to Zn(2+). Asp-75 is a catalytic residue. Asp-107 serves as a coordination point for Zn(2+). Catalysis depends on Glu-141, which acts as the Proton acceptor. 3 residues coordinate Zn(2+): Glu-142, Glu-170, and His-356.

The protein belongs to the peptidase M20A family. DapE subfamily. In terms of assembly, homodimer. It depends on Zn(2+) as a cofactor. Co(2+) serves as cofactor.

The catalysed reaction is N-succinyl-(2S,6S)-2,6-diaminopimelate + H2O = (2S,6S)-2,6-diaminopimelate + succinate. It participates in amino-acid biosynthesis; L-lysine biosynthesis via DAP pathway; LL-2,6-diaminopimelate from (S)-tetrahydrodipicolinate (succinylase route): step 3/3. Its function is as follows. Catalyzes the hydrolysis of N-succinyl-L,L-diaminopimelic acid (SDAP), forming succinate and LL-2,6-diaminopimelate (DAP), an intermediate involved in the bacterial biosynthesis of lysine and meso-diaminopimelic acid, an essential component of bacterial cell walls. This chain is Succinyl-diaminopimelate desuccinylase, found in Pseudomonas syringae pv. syringae (strain B728a).